Consider the following 1120-residue polypeptide: Prophage side tail fiber protein homolog StfR (1120 aa).

3 disordered regions span residues 129-154 (KSAS…SARA), 221-442 (SAST…ATRA), and 960-1021 (SGRA…AGAH). Low complexity-rich tracts occupy residues 221–239 (SAST…ARDA), 248–395 (SSET…SASA), and 402–442 (RQAS…ATRA). Over residues 985-1021 (DLGTKTTSSFDYGTKSTNNTGAHTHSVSGSTNSAGAH) the composition is skewed to polar residues.

Belongs to the tail fiber family.

This Escherichia coli (strain K12) protein is Prophage side tail fiber protein homolog StfR (stfR).